The chain runs to 131 residues: Hydrophilin PGA14 (131 aa).

An N-terminal signal peptide occupies residues 1–18 (MKFTTVATVFAISSLAAA). 2 stretches are compositionally biased toward basic and acidic residues: residues 42–59 (YGRF…ETGT) and 79–96 (KESD…RDSK). The tract at residues 42–110 (YGRFDKTSRS…NSTTSSGNNG (69 aa)) is disordered. N-linked (GlcNAc...) asparagine glycans are attached at residues Asn-97 and Asn-101. Over residues 97-110 (NASSNSTTSSGNNG) the composition is skewed to low complexity. The GPI-anchor amidated serine moiety is linked to residue Ser-105. A propeptide spans 106–131 (SGNNGVATGVSLGLAGVLAVGAALVI) (removed in mature form).

The protein belongs to the PGA14 family. In terms of processing, the GPI-anchor is attached to the protein in the endoplasmic reticulum and serves to target the protein to the cell surface. There, the glucosamine-inositol phospholipid moiety is cleaved off and the GPI-modified mannoprotein is covalently attached via its lipidless GPI glycan remnant to the 1,6-beta-glucan of the outer cell wall layer.

It localises to the secreted. It is found in the cell wall. Its subcellular location is the membrane. Hydrophilin which is essential to overcome the simple stress of the desiccation-rehydration process. This is Hydrophilin PGA14 (PGA14) from Candida albicans (strain SC5314 / ATCC MYA-2876) (Yeast).